A 194-amino-acid polypeptide reads, in one-letter code: 7-methyl-GTP pyrophosphatase (194 aa).

The active-site Proton acceptor is the Asp-69.

This sequence belongs to the Maf family. YceF subfamily. The cofactor is a divalent metal cation.

The protein localises to the cytoplasm. It catalyses the reaction N(7)-methyl-GTP + H2O = N(7)-methyl-GMP + diphosphate + H(+). Its function is as follows. Nucleoside triphosphate pyrophosphatase that hydrolyzes 7-methyl-GTP (m(7)GTP). May have a dual role in cell division arrest and in preventing the incorporation of modified nucleotides into cellular nucleic acids. The sequence is that of 7-methyl-GTP pyrophosphatase from Sodalis glossinidius (strain morsitans).